The primary structure comprises 101 residues: Small ribosomal subunit protein uS14 (101 aa).

This sequence belongs to the universal ribosomal protein uS14 family. As to quaternary structure, part of the 30S ribosomal subunit. Contacts proteins S3 and S10.

Its function is as follows. Binds 16S rRNA, required for the assembly of 30S particles and may also be responsible for determining the conformation of the 16S rRNA at the A site. The protein is Small ribosomal subunit protein uS14 of Buchnera aphidicola subsp. Schizaphis graminum (strain Sg).